A 2718-amino-acid chain; its full sequence is Zinc finger protein 40 (2718 aa).

3 disordered regions span residues 58-182 (HLKK…CISS), 210-256 (LSQK…AESQ), and 335-373 (GLTSPSSRSQVTPQNQQMDSASPLSISPANSTQSPPMPI). Serine 141 is modified (phosphoserine). Residues 142-158 (ELRRWRSEGADPAKFSD) are compositionally biased toward basic and acidic residues. Composition is skewed to polar residues over residues 164 to 182 (DSSSLSSKTRTDNSECISS) and 237 to 256 (KNSSMDAPNQTSQELVAESQ). The segment at 406–428 (YICEYCNRACAKPSVLLKHIRSH) adopts a C2H2-type 1 zinc-finger fold. Threonine 429 carries the post-translational modification Phosphothreonine. A C2H2-type 2 zinc finger spans residues 434 to 456 (YPCVTCGFSFKTKSNLYKHKKSH). Serine 476, serine 479, serine 492, serine 495, serine 571, and serine 577 each carry phosphoserine. The interval 484–511 (SIHSDVEDSGESEEEGATDERQHDLGAM) is disordered. Residues 490–500 (EDSGESEEEGA) are compositionally biased toward acidic residues. The segment at 574 to 727 (RTDSPKAMDP…TPSALPTGEK (154 aa)) is disordered. The span at 576–585 (DSPKAMDPKP) shows a compositional bias: basic and acidic residues. A compositionally biased stretch (polar residues) spans 588-612 (SSAQKQKDLQVTNVQPLSANMSQGG). Over residues 617–626 (ETNENSHQKG) the composition is skewed to basic and acidic residues. Composition is skewed to polar residues over residues 644–687 (AQLQ…QTVS) and 698–721 (STEQDSGRSNGPSAALVTTSTPSA). A phosphoserine mark is found at serine 670 and serine 681. Residues 956–986 (GTMFECETCRNRYRKLENFENHKKFYCSELH) form a CCHC HIVEP-type zinc finger. The tract at residues 1022-1062 (WEQTPQIRKRRKMKSVGDDEELQQNESGTSPKSSEGLQFQN) is disordered. Residues serine 1036, serine 1051, serine 1091, serine 1158, serine 1161, and serine 1180 each carry the phosphoserine modification. Positions 1045–1062 (QNESGTSPKSSEGLQFQN) are enriched in polar residues. The interval 1138-1169 (HTNSLSRPNSFDKPEPFERASPVSFQELNRTG) is disordered. The span at 1160–1169 (VSFQELNRTG) shows a compositional bias: polar residues. Composition is skewed to basic and acidic residues over residues 1202 to 1219 (LRGELQESSRKSPSERHV) and 1246 to 1259 (DLEAQCHDQEKSEK). Disordered regions lie at residues 1202 to 1282 (LRGE…PKKK), 1384 to 1414 (RSKSFDCGSITPPQTTPLTELQPPSSPSRVG), and 1523 to 1548 (SHQSTQLSLQVSTQGSKPDKNSVLSG). Threonine 1268 bears the Phosphothreonine mark. 2 stretches are compositionally biased toward low complexity: residues 1394–1406 (TPPQTTPLTELQP) and 1523–1536 (SHQSTQLSLQVSTQ). Residues serine 1735, serine 1740, serine 1749, and serine 1753 each carry the phosphoserine modification. Residues 1871 to 1883 (VRSSPAPSENTHI) show a composition bias toward polar residues. Positions 1871 to 1911 (VRSSPAPSENTHISPLKCTDNNQERKSPGVKNQGDKVNIQE) are disordered. Residues serine 1884 and serine 2033 each carry the phosphoserine modification. 2 consecutive C2H2-type zinc fingers follow at residues 2088–2110 (YICEECGIRCKKPSMLKKHIRTH) and 2116–2140 (YHCTYCNFSFKTKGNLTKHMKSKAH). 4 disordered regions span residues 2155-2228 (DEQD…PVST), 2265-2303 (SDYNRKTLSPGKARQRAARDENDTIPSVDTSRSPCHQMS), 2327-2381 (SPSS…THLF), and 2572-2718 (PASQ…VIAT). Over residues 2164–2175 (EKQRFSYERSGY) the composition is skewed to basic and acidic residues. Positions 2176–2198 (DLEESDGPDEDDNENEDDDEDSQ) are enriched in acidic residues. Composition is skewed to polar residues over residues 2199 to 2226 (AESVLSATPSVTASPQHLPSRSSLQDPV) and 2288 to 2300 (TIPSVDTSRSPCH). Phosphoserine is present on residues serine 2327 and serine 2599. Positions 2573–2608 (ASQSKACETQPKQTSVASANQVSRTESPQGLPTVQR) are enriched in polar residues. Over residues 2623 to 2637 (DHARLDGLSKMDTEK) the composition is skewed to basic and acidic residues. A compositionally biased stretch (polar residues) spans 2651–2663 (TSIQGQPASTSQP). Residues serine 2669 and serine 2682 each carry the phosphoserine modification.

As to quaternary structure, interacts with UTP4.

Its subcellular location is the nucleus. It localises to the cytoplasm. Functionally, this protein specifically binds to the DNA sequence 5'-GGGACTTTCC-3' which is found in the enhancer elements of numerous viral promoters such as those of SV40, CMV, or HIV-1. In addition, related sequences are found in the enhancer elements of a number of cellular promoters, including those of the class I MHC, interleukin-2 receptor, and interferon-beta genes. It may act in T-cell activation. Involved in activating HIV-1 gene expression. Isoform 2 and isoform 3 also bind to the IPCS (IRF1 and p53 common sequence) DNA sequence in the promoter region of interferon regulatory factor 1 and p53 genes and are involved in transcription regulation of these genes. Isoform 2 does not activate HIV-1 gene expression. Isoform 2 and isoform 3 may be involved in apoptosis. The sequence is that of Zinc finger protein 40 (HIVEP1) from Homo sapiens (Human).